A 529-amino-acid chain; its full sequence is Peptide chain release factor 3 (529 aa).

The tr-type G domain maps to alanine 11–methionine 280. GTP-binding positions include serine 20 to threonine 27, aspartate 88 to histidine 92, and asparagine 142 to aspartate 145.

This sequence belongs to the TRAFAC class translation factor GTPase superfamily. Classic translation factor GTPase family. PrfC subfamily.

It localises to the cytoplasm. Functionally, increases the formation of ribosomal termination complexes and stimulates activities of RF-1 and RF-2. It binds guanine nucleotides and has strong preference for UGA stop codons. It may interact directly with the ribosome. The stimulation of RF-1 and RF-2 is significantly reduced by GTP and GDP, but not by GMP. The sequence is that of Peptide chain release factor 3 from Shigella dysenteriae serotype 1 (strain Sd197).